The chain runs to 294 residues: 2-oxoglutaramate amidase (294 aa).

The 246-residue stretch at 16 to 261 folds into the CN hydrolase domain; the sequence is LDVAAVQVKF…EAVLRATLNF (246 aa). E55 (proton acceptor) is an active-site residue. The active-site Proton donor is the K129. C168 (nucleophile) is an active-site residue.

The protein belongs to the carbon-nitrogen hydrolase superfamily. NIT1/NIT2 family.

The catalysed reaction is 2-oxoglutaramate + H2O = 2-oxoglutarate + NH4(+). It participates in alkaloid degradation; nicotine degradation. Functionally, catalyzes the conversion of 2-oxoglutaramate to 2-oxoglutarate. Together with glutamate dehydrogenase, may form a physiologically relevant enzyme couple, leading to transformation of metabolically inert 2-oxoglutaramate derived from trihydroxypyridine into glutamate, a central compound of nitrogen metabolism. This chain is 2-oxoglutaramate amidase, found in Paenarthrobacter nicotinovorans (Arthrobacter nicotinovorans).